We begin with the raw amino-acid sequence, 359 residues long: Peptide chain release factor 1 (359 aa).

Position 235 is an N5-methylglutamine (Gln235).

Belongs to the prokaryotic/mitochondrial release factor family. Post-translationally, methylated by PrmC. Methylation increases the termination efficiency of RF1.

It is found in the cytoplasm. Its function is as follows. Peptide chain release factor 1 directs the termination of translation in response to the peptide chain termination codons UAG and UAA. This chain is Peptide chain release factor 1, found in Anaplasma phagocytophilum (strain HZ).